Consider the following 561-residue polypeptide: MGFSFVTNAAIAAHMPPSKQEIIRRDAKFHPTIWGDHFIQYLDTPIDPPQKVVERMEELKKQVRAMLRDTNLDISLIDWIQRTGIAYHFEEQIAETLKHVYEASTLTTDSSKYLEHFDLRHIALRFRLSRQQGYHASTDVFKRFMDEGDKFKQSIANDIEGMLSLYEASFMSVKGEAILDEALAFTGKNLEATLPNLTGSLAQQVECALEIPLRRCTDLVKARRSISCYENKNGRNEVVLELAKLDFNLLQAVHQRELALLTSWWNELGASTNLPFTRNRVVELYFWVLEVLSKPEHARAREIMVKSIIMASILDDVYDVYGTLEELQLFTSALERWDLQALEQLPNTIKTAYSIVLRVFKEYEDLLKPHEVYRVGFARKALIPYMNAYFLEAKWFYSHHHPSFEEYMDNALVSCGYPFLFLVSLVGLDEIATKDVFEWAIKRPNIVVAASMICRNRDDIVGHKEEQERGDVPSGVECYTKDHGCTEEEACMALQAMVDDAWKDINCELLHDTSMPKAILMRAVGLARIISILYQYRDGYSDSTHETKAHVTQVLVQPIPL.

D315, D319, D458, and E466 together coordinate Mg(2+). A DDXXD motif motif is present at residues 315 to 319 (DDVYD).

This sequence belongs to the terpene synthase family. Tpsa subfamily. Requires Mg(2+) as cofactor. It depends on Mn(2+) as a cofactor. Mostly expressed in stems amd leaves, and, to a lower extent, in roots and fruits.

It carries out the reaction (2E,6E)-farnesyl diphosphate = germacrene D + diphosphate. The catalysed reaction is (2E,6E)-farnesyl diphosphate = alpha-copaene + diphosphate. It functions in the pathway secondary metabolite biosynthesis; terpenoid biosynthesis. In terms of biological role, sesquiterpene synthase involved in the biosynthesis of volatile compounds that contribute to the characteristic flavors of black pepper. Mediates the conversion of (2E,6E)-farnesyl diphosphate (FPP) into alpha-copaene and germacrene D. This is Terpene synthase 3 from Piper nigrum (Black pepper).